The sequence spans 347 residues: L-Ala-D/L-amino acid epimerase (347 aa).

156 to 158 (KLK) is a binding site for substrate. D183, E211, and D237 together coordinate Mg(2+). Substrate-binding positions include K259 and 309–311 (DID).

This sequence belongs to the mandelate racemase/muconate lactonizing enzyme family. The cofactor is Mg(2+).

Its function is as follows. Dipeptide epimerase with a broad substrate specificity. Catalyzes the epimerization of L-Ala-L-Ala, L-Ala-L-Ser, L-Ala-L-Thr, L-Ala-L-Met, L-Ala-L-Phe, L-Ala-L-Tyr, L-Gly-L-Asp, L-Val-L-Asp, L-Val-L-Glu and L-Val-L-Phe (in vitro). Can also catalyze the epimerization of L-Ala-L-Glu, but with lower efficiency. This chain is L-Ala-D/L-amino acid epimerase, found in Pedosphaera parvula (strain Ellin514).